The following is a 535-amino-acid chain: Bifunctional purine biosynthesis protein PurH (535 aa).

Positions 6–151 (TRLPIRRALI…KNHKDVAIVV (146 aa)) constitute an MGS-like domain.

This sequence belongs to the PurH family.

The catalysed reaction is (6R)-10-formyltetrahydrofolate + 5-amino-1-(5-phospho-beta-D-ribosyl)imidazole-4-carboxamide = 5-formamido-1-(5-phospho-D-ribosyl)imidazole-4-carboxamide + (6S)-5,6,7,8-tetrahydrofolate. The enzyme catalyses IMP + H2O = 5-formamido-1-(5-phospho-D-ribosyl)imidazole-4-carboxamide. It functions in the pathway purine metabolism; IMP biosynthesis via de novo pathway; 5-formamido-1-(5-phospho-D-ribosyl)imidazole-4-carboxamide from 5-amino-1-(5-phospho-D-ribosyl)imidazole-4-carboxamide (10-formyl THF route): step 1/1. Its pathway is purine metabolism; IMP biosynthesis via de novo pathway; IMP from 5-formamido-1-(5-phospho-D-ribosyl)imidazole-4-carboxamide: step 1/1. This chain is Bifunctional purine biosynthesis protein PurH, found in Pseudomonas fluorescens (strain SBW25).